The following is a 212-amino-acid chain: Ribosomal RNA small subunit methyltransferase G (212 aa).

S-adenosyl-L-methionine contacts are provided by residues Gly-73, Phe-78, 96–98 (ESS), 124–125 (VE), and Arg-141.

This sequence belongs to the methyltransferase superfamily. RNA methyltransferase RsmG family.

The protein localises to the cytoplasm. In terms of biological role, specifically methylates the N7 position of a guanine in 16S rRNA. This Aster yellows witches'-broom phytoplasma (strain AYWB) protein is Ribosomal RNA small subunit methyltransferase G.